A 139-amino-acid polypeptide reads, in one-letter code: Large ribosomal subunit protein uL16 (139 aa).

Residues 1–16 (MLIPKRTKYRKQHRPV) are compositionally biased toward basic residues. Residues 1 to 22 (MLIPKRTKYRKQHRPVRSGMSK) are disordered.

The protein belongs to the universal ribosomal protein uL16 family. In terms of assembly, part of the 50S ribosomal subunit.

In terms of biological role, binds 23S rRNA and is also seen to make contacts with the A and possibly P site tRNAs. This is Large ribosomal subunit protein uL16 from Bifidobacterium longum subsp. infantis (strain ATCC 15697 / DSM 20088 / JCM 1222 / NCTC 11817 / S12).